The primary structure comprises 137 residues: Large ribosomal subunit protein bL21 (137 aa).

Positions 1–26 (MADTKTATPATDAEEATATPPAAAPS) are disordered.

This sequence belongs to the bacterial ribosomal protein bL21 family. In terms of assembly, part of the 50S ribosomal subunit. Contacts protein L20.

This protein binds to 23S rRNA in the presence of protein L20. The sequence is that of Large ribosomal subunit protein bL21 from Parasynechococcus marenigrum (strain WH8102).